The chain runs to 310 residues: GMP synthase [glutamine-hydrolyzing] subunit B (310 aa).

In terms of domain architecture, GMPS ATP-PPase spans 2 to 185 (FKTEPFIEES…LGLPDQIAHR (184 aa)). ATP is bound at residue 29 to 35 (SGGVDSA).

As to quaternary structure, heterodimer composed of a glutamine amidotransferase subunit (A) and a GMP-binding subunit (B).

It carries out the reaction XMP + L-glutamine + ATP + H2O = GMP + L-glutamate + AMP + diphosphate + 2 H(+). Its pathway is purine metabolism; GMP biosynthesis; GMP from XMP (L-Gln route): step 1/1. Catalyzes the synthesis of GMP from XMP. The protein is GMP synthase [glutamine-hydrolyzing] subunit B of Methanococcus maripaludis (strain DSM 14266 / JCM 13030 / NBRC 101832 / S2 / LL).